A 217-amino-acid chain; its full sequence is 4-hydroxy-tetrahydrodipicolinate reductase (217 aa).

NAD(+) contacts are provided by residues 7–12 (GFKGKM), 71–73 (GTT), and 95–98 (SYNF). Histidine 127 acts as the Proton donor/acceptor in catalysis. Residue histidine 128 participates in (S)-2,3,4,5-tetrahydrodipicolinate binding. Residue lysine 131 is the Proton donor of the active site. Position 137–138 (137–138 (GT)) interacts with (S)-2,3,4,5-tetrahydrodipicolinate.

Belongs to the DapB family.

It is found in the cytoplasm. It carries out the reaction (S)-2,3,4,5-tetrahydrodipicolinate + NAD(+) + H2O = (2S,4S)-4-hydroxy-2,3,4,5-tetrahydrodipicolinate + NADH + H(+). The catalysed reaction is (S)-2,3,4,5-tetrahydrodipicolinate + NADP(+) + H2O = (2S,4S)-4-hydroxy-2,3,4,5-tetrahydrodipicolinate + NADPH + H(+). Its pathway is amino-acid biosynthesis; L-lysine biosynthesis via DAP pathway; (S)-tetrahydrodipicolinate from L-aspartate: step 4/4. Catalyzes the conversion of 4-hydroxy-tetrahydrodipicolinate (HTPA) to tetrahydrodipicolinate. This chain is 4-hydroxy-tetrahydrodipicolinate reductase, found in Thermosipho africanus (strain TCF52B).